The chain runs to 321 residues: Probable arabinan endo-1,5-alpha-L-arabinosidase C (321 aa).

Residues 1–18 form the signal peptide; sequence MYLYTLILLFLASANVNA. The active-site Proton acceptor is the Asp33. A glycan (N-linked (GlcNAc...) asparagine) is linked at Asn192. The Proton donor role is filled by Glu200. Asn224 is a glycosylation site (N-linked (GlcNAc...) asparagine).

Belongs to the glycosyl hydrolase 43 family.

The protein resides in the secreted. It carries out the reaction Endohydrolysis of (1-&gt;5)-alpha-arabinofuranosidic linkages in (1-&gt;5)-arabinans.. Its pathway is glycan metabolism; L-arabinan degradation. Functionally, endo-1,5-alpha-L-arabinanase involved in degradation of pectin. Its preferred substrate is linear 1,5-alpha-L-arabinan. The protein is Probable arabinan endo-1,5-alpha-L-arabinosidase C (abnC) of Aspergillus fumigatus (strain ATCC MYA-4609 / CBS 101355 / FGSC A1100 / Af293) (Neosartorya fumigata).